The primary structure comprises 855 residues: DNA mismatch repair protein MutS (855 aa).

ATP is bound at residue 613–620; the sequence is GPNMGGKS.

The protein belongs to the DNA mismatch repair MutS family.

This protein is involved in the repair of mismatches in DNA. It is possible that it carries out the mismatch recognition step. This protein has a weak ATPase activity. The protein is DNA mismatch repair protein MutS of Azotobacter vinelandii (strain DJ / ATCC BAA-1303).